The following is a 172-amino-acid chain: MSVLQVLTFPDDRLRTVAKPVDAVTPEIQKIVDDMIETMYDEEGIGLAATQVDIHKRIVVIDISETRDEPMVLINPEILEKRGEDGIEEGCLSVPGARALVPRAAEVTVKALDRDGKEFTFEADDLLAICVQHELDHLQGKLFVDYLSPLKRKRIQDKLAKIKRFNEKQQNA.

Residues cysteine 91 and histidine 133 each contribute to the Fe cation site. Glutamate 134 is a catalytic residue. Histidine 137 is a binding site for Fe cation.

This sequence belongs to the polypeptide deformylase family. Fe(2+) is required as a cofactor.

The catalysed reaction is N-terminal N-formyl-L-methionyl-[peptide] + H2O = N-terminal L-methionyl-[peptide] + formate. Removes the formyl group from the N-terminal Met of newly synthesized proteins. Requires at least a dipeptide for an efficient rate of reaction. N-terminal L-methionine is a prerequisite for activity but the enzyme has broad specificity at other positions. This chain is Peptide deformylase 1, found in Vibrio parahaemolyticus serotype O3:K6 (strain RIMD 2210633).